A 207-amino-acid chain; its full sequence is Large ribosomal subunit protein uL18 (207 aa).

The protein belongs to the universal ribosomal protein uL18 family. Part of the 50S ribosomal subunit. Contacts the 5S and 23S rRNAs.

Its function is as follows. This is one of the proteins that bind and probably mediate the attachment of the 5S RNA into the large ribosomal subunit, where it forms part of the central protuberance. This chain is Large ribosomal subunit protein uL18, found in Caldivirga maquilingensis (strain ATCC 700844 / DSM 13496 / JCM 10307 / IC-167).